The following is a 282-amino-acid chain: Shikimate dehydrogenase (NADP(+)) (282 aa).

Residues 15–17 (SKS) and threonine 62 contribute to the shikimate site. The active-site Proton acceptor is the lysine 66. Asparagine 87 and aspartate 103 together coordinate shikimate. Residues 127 to 131 (GAGGA), 151 to 156 (NRTHTK), and methionine 220 contribute to the NADP(+) site. Tyrosine 222 lines the shikimate pocket. Residue glycine 244 coordinates NADP(+).

It belongs to the shikimate dehydrogenase family. Homodimer.

The enzyme catalyses shikimate + NADP(+) = 3-dehydroshikimate + NADPH + H(+). Its pathway is metabolic intermediate biosynthesis; chorismate biosynthesis; chorismate from D-erythrose 4-phosphate and phosphoenolpyruvate: step 4/7. Its function is as follows. Involved in the biosynthesis of the chorismate, which leads to the biosynthesis of aromatic amino acids. Catalyzes the reversible NADPH linked reduction of 3-dehydroshikimate (DHSA) to yield shikimate (SA). The chain is Shikimate dehydrogenase (NADP(+)) from Shewanella baltica (strain OS195).